Reading from the N-terminus, the 512-residue chain is MRCNIKRLFTLAIGVFAATLVIISFSKDNYEREWKQGPQSNEARAVGHQSPDLFPVGQNSLPHQPIPPSLGEKDLSDPFNFLFSSNKITLRKLYDLTKNVDFDQLRQNECKKNITLSKFWEKSEQRNVPEDDNWERFYSNIGSCSVYSDDQMIDNLLHDLNTSPIKHVHIMDGGTQVKFVFTFKNDKQAVFKPMRFGRDYESDPNHFYFSDFERHHAEIATFHLDRVLGFRRAIPTVGRVLNMTTELFEKAEKKLKKTFFFSPAKNFCFVSRCDYYCDTTHAICGLPDMKEGSVQVFLPDESAVPRKHNRSPYRRTYSKKNQVAEWQSSMNYCTDKVKTKRQYAHGRRLLDLVDIHILDYLIGNQDRHHFESFNVFNDLPSYAIHLDHGRAFGRSDFDDDDIILPLRQCCILRPSTFQTLMNFYSTPKSLTKALHESLSKDPAHPILAYKHYPAMERRLAKIMSHILECFESRGVAEVLVAEYNNPDVSDAEQNDEEQSEEHQDKKDDKKTV.

Topologically, residues Met-1–Lys-6 are cytoplasmic. Residues Arg-7–Ser-26 traverse the membrane as a helical; Signal-anchor for type II membrane protein segment. Residues Lys-27 to Val-512 are Lumenal-facing. A disulfide bond links Cys-110 and Cys-144. The N-linked (GlcNAc...) asparagine glycan is linked to Asn-113. Gln-176, Lys-192, and Glu-213 together coordinate ATP. A Mn(2+)-binding site is contributed by Glu-213. Asn-242 carries N-linked (GlcNAc...) asparagine glycosylation. 2 disulfides stabilise this stretch: Cys-268–Cys-284 and Cys-273–Cys-277. Position 295–298 (Gln-295–Leu-298) interacts with ATP. Intrachain disulfides connect Cys-333/Cys-409 and Cys-410/Cys-469. Asp-366 is a catalytic residue. ATP is bound by residues Glu-371 and Asp-387. Asp-387 lines the Mn(2+) pocket. Residues Pro-486 to Val-512 form a disordered region. Over residues Ser-489–Ser-499 the composition is skewed to acidic residues. Positions Glu-500–Val-512 are enriched in basic and acidic residues.

It belongs to the FAM20 family. Mn(2+) is required as a cofactor.

It is found in the golgi apparatus membrane. It localises to the secreted. It carries out the reaction L-seryl-[protein] + ATP = O-phospho-L-seryl-[protein] + ADP + H(+). The enzyme catalyses L-threonyl-[protein] + ATP = O-phospho-L-threonyl-[protein] + ADP + H(+). Functionally, golgi serine/threonine protein kinase that phosphorylates secretory pathway proteins within Ser-x-Glu/pSer motifs. The chain is Extracellular serine/threonine protein kinase CeFam20 from Caenorhabditis elegans.